The primary structure comprises 692 residues: DNA ligase (692 aa).

Residues 35 to 39 (DLVYD), 88 to 89 (SL), and Glu-117 each bind NAD(+). Lys-119 serves as the catalytic N6-AMP-lysine intermediate. The NAD(+) site is built by Arg-140, Glu-176, Lys-301, and Lys-325. Zn(2+) is bound by residues Cys-416, Cys-419, Cys-434, and Cys-439. Positions 611-692 (LTNQSNSWAS…FDLIKNSKKT (82 aa)) constitute a BRCT domain.

It belongs to the NAD-dependent DNA ligase family. LigA subfamily. Mg(2+) is required as a cofactor. It depends on Mn(2+) as a cofactor.

The enzyme catalyses NAD(+) + (deoxyribonucleotide)n-3'-hydroxyl + 5'-phospho-(deoxyribonucleotide)m = (deoxyribonucleotide)n+m + AMP + beta-nicotinamide D-nucleotide.. Functionally, DNA ligase that catalyzes the formation of phosphodiester linkages between 5'-phosphoryl and 3'-hydroxyl groups in double-stranded DNA using NAD as a coenzyme and as the energy source for the reaction. It is essential for DNA replication and repair of damaged DNA. This is DNA ligase from Mesomycoplasma hyopneumoniae (strain 232) (Mycoplasma hyopneumoniae).